We begin with the raw amino-acid sequence, 405 residues long: Terpene cyclase pbrA (405 aa).

Positions 103, 168, 229, 233, 237, and 241 each coordinate Mg(2+). The short motif at 103 to 108 (DDEISS) is the D(D/E)XX(D/E) motif element. The NSE motif motif lies at 227-237 (LVNDLFSFYKE). The WxxxxxRY motif signature appears at 316–323 (EDLGGSSA).

It belongs to the trichodiene synthase family. Mg(2+) is required as a cofactor.

It functions in the pathway secondary metabolite biosynthesis; terpenoid biosynthesis. Terpene cyclase; part of the gene cluster that mediates the biosynthesis of the sesquiterpenoid aspterric acid (AA), an inhibitor of dihydroxy-acid dehydratase (DHAD) effective as an herbicide. PbrA cyclizes farnesyl diphosphate (FPP) to produce (-)-daucane. The cytochrome P450 monooxygenase pbrBB then converts (-)-daucane into the alpha-epoxy carboxylate intermediate which is further converted into the tricyclic aspterric acid by the cytochrome P450 monooxygenase pbrC. The chain is Terpene cyclase pbrA from Penicillium brasilianum.